The sequence spans 1428 residues: uncharacterized protein (1428 aa).

Disordered stretches follow at residues 1–53, 249–274, and 377–413; these read MAKK…AFKV, DIKHTPNKETQPSNQVDDSLKSKDSK, and KNGIQEDSQSTDDSSKDDDNNSESNDMSPHNDAETRA. Residues 16–33 are compositionally biased toward polar residues; sequence ATTSIPSRSASSPANKNQ. The span at 34–51 shows a compositional bias: basic and acidic residues; it reads VKGEKNNKTQKVEPKNAF. Residues 256-265 are compositionally biased toward polar residues; sequence KETQPSNQVD. The Helicase ATP-binding domain maps to 641-811; that stretch reads IDAVNNSQLL…FEGSNLITIP (171 aa). 654–661 is a binding site for ATP; that stretch reads GDTGCGKS. Residues 758–761 carry the DEAH box motif; that stretch reads DEVH. One can recognise a Helicase C-terminal domain in the interval 886–1064; that stretch reads LIVYLLKYIF…EVVLRVKMCQ (179 aa).

Belongs to the helicase family. SKI2 subfamily.

The protein localises to the cytoplasm. This is an uncharacterized protein from Schizosaccharomyces pombe (strain 972 / ATCC 24843) (Fission yeast).